The sequence spans 250 residues: NAD(P)H-quinone oxidoreductase subunit K, chloroplastic (250 aa).

The [4Fe-4S] cluster site is built by cysteine 67, cysteine 68, cysteine 132, and cysteine 163.

Belongs to the complex I 20 kDa subunit family. As to quaternary structure, NDH is composed of at least 16 different subunits, 5 of which are encoded in the nucleus. [4Fe-4S] cluster is required as a cofactor.

The protein localises to the plastid. It localises to the chloroplast thylakoid membrane. The catalysed reaction is a plastoquinone + NADH + (n+1) H(+)(in) = a plastoquinol + NAD(+) + n H(+)(out). The enzyme catalyses a plastoquinone + NADPH + (n+1) H(+)(in) = a plastoquinol + NADP(+) + n H(+)(out). Functionally, NDH shuttles electrons from NAD(P)H:plastoquinone, via FMN and iron-sulfur (Fe-S) centers, to quinones in the photosynthetic chain and possibly in a chloroplast respiratory chain. The immediate electron acceptor for the enzyme in this species is believed to be plastoquinone. Couples the redox reaction to proton translocation, and thus conserves the redox energy in a proton gradient. This is NAD(P)H-quinone oxidoreductase subunit K, chloroplastic from Adiantum capillus-veneris (Maidenhair fern).